The chain runs to 337 residues: Nucleotide sugar transporter SLC35D2 (337 aa).

Topologically, residues 1-27 (MTAGGQAEAEGAGGEPGAARLPSRVAR) are cytoplasmic. The helical transmembrane segment at 28–48 (LLSALFYGTCSFLIVLVNKAL) threads the bilayer. The Extracellular portion of the chain corresponds to 49–53 (LTTYG). Residues 54–74 (FPSPIFLGIGQMAATIMILYV) form a helical membrane-spanning segment. Residues 75–146 (SKLNKIIHFP…IILGKQYSLN (72 aa)) lie on the Cytoplasmic side of the membrane. The next 2 helical transmembrane spans lie at 147–167 (IILSVFAIILGAFIAAGSDLA) and 168–188 (FNLEGYIFVFLNDIFTAANGV). Residues 189–201 (YTKQKMDPKELGK) lie on the Cytoplasmic side of the membrane. A helical transmembrane segment spans residues 202-222 (YGVLFYNACFMIIPTLIISVS). The Extracellular portion of the chain corresponds to 223–237 (TGDLQQATEFNQWKN). The chain crosses the membrane as a helical span at residues 238–258 (VVFILQFLLSCFLGFLLMYST). Residues 259 to 265 (VLCSYYN) are Cytoplasmic-facing. Residues 266–288 (SALTTAVVGAIKNVSVAYIGILI) traverse the membrane as a helical segment. At 289-292 (GGDY) the chain is on the extracellular side. Residues 293–315 (IFSLLNFVGLNICMAGGLRYSFL) form a helical membrane-spanning segment. Residues 316 to 337 (TLSSQLKPKPVGEENICLDLKS) are Cytoplasmic-facing.

It belongs to the TPT transporter family. SLC35D subfamily. In terms of tissue distribution, highly expressed in heart, kidney, small intestine, placenta, lung and peripheral blood leukocyte. Weakly expressed in skeletal muscle and spleen. Not expressed in brain, colon and thymus.

The protein localises to the golgi apparatus membrane. The catalysed reaction is UMP(out) + UDP-N-acetyl-alpha-D-glucosamine(in) = UMP(in) + UDP-N-acetyl-alpha-D-glucosamine(out). The enzyme catalyses UMP(out) + UDP-alpha-D-glucose(in) = UMP(in) + UDP-alpha-D-glucose(out). In terms of biological role, nucleotide sugar antiporter transporting UDP-N-acetylglucosamine (UDP-GlcNAc) and UDP-glucose (UDP-Glc) from the cytosol into the lumen of the Golgi in exchange of UMP. By supplying UDP-N-acetylglucosamine, a donor substrate to heparan sulfate synthases, probably takes part in the synthesis of these glycoconjugates. The protein is Nucleotide sugar transporter SLC35D2 of Homo sapiens (Human).